The following is a 295-amino-acid chain: tRNA-cytidine(32) 2-sulfurtransferase (295 aa).

Residues 59–64 (SGGKDS) carry the PP-loop motif motif. Positions 134, 137, and 225 each coordinate [4Fe-4S] cluster.

Belongs to the TtcA family. In terms of assembly, homodimer. Mg(2+) is required as a cofactor. [4Fe-4S] cluster serves as cofactor.

The protein localises to the cytoplasm. The enzyme catalyses cytidine(32) in tRNA + S-sulfanyl-L-cysteinyl-[cysteine desulfurase] + AH2 + ATP = 2-thiocytidine(32) in tRNA + L-cysteinyl-[cysteine desulfurase] + A + AMP + diphosphate + H(+). It functions in the pathway tRNA modification. In terms of biological role, catalyzes the ATP-dependent 2-thiolation of cytidine in position 32 of tRNA, to form 2-thiocytidine (s(2)C32). The sulfur atoms are provided by the cysteine/cysteine desulfurase (IscS) system. This Ruegeria sp. (strain TM1040) (Silicibacter sp.) protein is tRNA-cytidine(32) 2-sulfurtransferase.